Here is a 78-residue protein sequence, read N- to C-terminus: Bowman-Birk type proteinase inhibitors I-A, I-B, and I-A' (78 aa).

7 disulfide bridges follow: cysteine 18–cysteine 72, cysteine 19–cysteine 34, cysteine 22–cysteine 68, cysteine 24–cysteine 32, cysteine 42–cysteine 49, cysteine 46–cysteine 61, and cysteine 51–cysteine 59.

Belongs to the Bowman-Birk serine protease inhibitor family.

These inhibitors strongly inhibit trypsin. In Phaseolus angularis (Azuki bean), this protein is Bowman-Birk type proteinase inhibitors I-A, I-B, and I-A'.